We begin with the raw amino-acid sequence, 446 residues long: Tol-Pal system protein TolB (446 aa).

The signal sequence occupies residues 1–24 (MKRAFLSALSVGLAALFLTGPAQA).

Belongs to the TolB family. The Tol-Pal system is composed of five core proteins: the inner membrane proteins TolA, TolQ and TolR, the periplasmic protein TolB and the outer membrane protein Pal. They form a network linking the inner and outer membranes and the peptidoglycan layer.

It localises to the periplasm. Functionally, part of the Tol-Pal system, which plays a role in outer membrane invagination during cell division and is important for maintaining outer membrane integrity. This is Tol-Pal system protein TolB from Dinoroseobacter shibae (strain DSM 16493 / NCIMB 14021 / DFL 12).